We begin with the raw amino-acid sequence, 134 residues long: Mite allergen Blo t 5 (134 aa).

The signal sequence occupies residues 1-17; the sequence is MKFAIVLIACFAASVLA. A coiled-coil region spans residues 18–113; it reads QEHKPKKDDF…RFNYEEAQTL (96 aa).

The protein belongs to the mite group 5 allergen family. In terms of assembly, may exist as homodimer and homotrimer. In terms of tissue distribution, midgut and hindgut contents as well as fecal pellets (at protein level).

The protein is Mite allergen Blo t 5 (BLOT5) of Blomia tropicalis (Mite).